The sequence spans 98 residues: NADH-ubiquinone oxidoreductase chain 4L (98 aa).

The next 3 helical transmembrane spans lie at 1 to 21, 29 to 49, and 61 to 81; these read MSLINMNLMLAFTMSLTGLLM, ALLCLEGMMLSLFTLTTLTIL, and IILLVFAACEAAIGLALLVMI.

It belongs to the complex I subunit 4L family. Core subunit of respiratory chain NADH dehydrogenase (Complex I) which is composed of 45 different subunits.

The protein localises to the mitochondrion inner membrane. It carries out the reaction a ubiquinone + NADH + 5 H(+)(in) = a ubiquinol + NAD(+) + 4 H(+)(out). In terms of biological role, core subunit of the mitochondrial membrane respiratory chain NADH dehydrogenase (Complex I) which catalyzes electron transfer from NADH through the respiratory chain, using ubiquinone as an electron acceptor. Part of the enzyme membrane arm which is embedded in the lipid bilayer and involved in proton translocation. The polypeptide is NADH-ubiquinone oxidoreductase chain 4L (MT-ND4L) (Platanista minor (Indus river dolphin)).